A 471-amino-acid chain; its full sequence is UDP-N-acetylmuramate--L-alanine ligase (471 aa).

Residue 112–118 (GTHGKTT) coordinates ATP.

This sequence belongs to the MurCDEF family.

Its subcellular location is the cytoplasm. The enzyme catalyses UDP-N-acetyl-alpha-D-muramate + L-alanine + ATP = UDP-N-acetyl-alpha-D-muramoyl-L-alanine + ADP + phosphate + H(+). It functions in the pathway cell wall biogenesis; peptidoglycan biosynthesis. Functionally, cell wall formation. The protein is UDP-N-acetylmuramate--L-alanine ligase of Aromatoleum aromaticum (strain DSM 19018 / LMG 30748 / EbN1) (Azoarcus sp. (strain EbN1)).